We begin with the raw amino-acid sequence, 445 residues long: GTPase Der (445 aa).

EngA-type G domains follow at residues 3–167 (PVIA…YAGQ) and 180–353 (IKIA…AAAM). GTP-binding positions include 9–16 (GRPNVGKS), 56–60 (DTGGF), 119–122 (NKAE), 186–193 (GRPNVGKS), 233–237 (DTAGL), and 298–301 (NKWD). Positions 354–438 (AKLPTPKLTR…PLRIEFRSSN (85 aa)) constitute a KH-like domain.

The protein belongs to the TRAFAC class TrmE-Era-EngA-EngB-Septin-like GTPase superfamily. EngA (Der) GTPase family. Associates with the 50S ribosomal subunit.

In terms of biological role, GTPase that plays an essential role in the late steps of ribosome biogenesis. The sequence is that of GTPase Der from Burkholderia vietnamiensis (strain G4 / LMG 22486) (Burkholderia cepacia (strain R1808)).